A 349-amino-acid polypeptide reads, in one-letter code: uncharacterized protein (349 aa).

Residues 1–29 (MKQKYENYFKKRLILNLLIFLLLACSSES) form the signal peptide.

This is an uncharacterized protein from Borreliella burgdorferi (strain ATCC 35210 / DSM 4680 / CIP 102532 / B31) (Borrelia burgdorferi).